We begin with the raw amino-acid sequence, 304 residues long: UPF0282 protein TSIB_1029 (304 aa).

This sequence belongs to the UPF0282 family.

The chain is UPF0282 protein TSIB_1029 from Thermococcus sibiricus (strain DSM 12597 / MM 739).